Here is a 113-residue protein sequence, read N- to C-terminus: Large ribosomal subunit protein bL17 (113 aa).

Belongs to the bacterial ribosomal protein bL17 family. In terms of assembly, part of the 50S ribosomal subunit. Contacts protein L32.

In Clostridium novyi (strain NT), this protein is Large ribosomal subunit protein bL17.